Consider the following 117-residue polypeptide: Large ribosomal subunit protein uL18 (117 aa).

This sequence belongs to the universal ribosomal protein uL18 family. Part of the 50S ribosomal subunit; part of the 5S rRNA/L5/L18/L25 subcomplex. Contacts the 5S and 23S rRNAs.

This is one of the proteins that bind and probably mediate the attachment of the 5S RNA into the large ribosomal subunit, where it forms part of the central protuberance. The protein is Large ribosomal subunit protein uL18 of Sphingopyxis alaskensis (strain DSM 13593 / LMG 18877 / RB2256) (Sphingomonas alaskensis).